Here is a 67-residue protein sequence, read N- to C-terminus: Sodium channel neurotoxin MeuNaTxalpha-10 (67 aa).

Residues 2-66 (RDGYIAKPHN…VPIRIPGKCH (65 aa)) form the LCN-type CS-alpha/beta domain. 4 disulfides stabilise this stretch: cysteine 12–cysteine 65, cysteine 16–cysteine 38, cysteine 24–cysteine 48, and cysteine 28–cysteine 50. Arginine 67 is a propeptide (removed by a carboxypeptidase).

This sequence belongs to the long (4 C-C) scorpion toxin superfamily. Sodium channel inhibitor family. Alpha subfamily. As to expression, expressed by the venom gland.

The protein localises to the secreted. In terms of biological role, alpha toxins bind voltage-independently at site-3 of sodium channels (Nav) and inhibit the inactivation of the activated channels, thereby blocking neuronal transmission. The protein is Sodium channel neurotoxin MeuNaTxalpha-10 of Mesobuthus eupeus (Lesser Asian scorpion).